The primary structure comprises 836 residues: Protein translocase subunit SecA (836 aa).

ATP-binding positions include glutamine 85, 103-107, and aspartate 492; that span reads GEGKT. 4 residues coordinate Zn(2+): cysteine 820, cysteine 822, cysteine 831, and cysteine 832.

It belongs to the SecA family. As to quaternary structure, monomer and homodimer. Part of the essential Sec protein translocation apparatus which comprises SecA, SecYEG and auxiliary proteins SecDF. Other proteins may also be involved. Zn(2+) serves as cofactor.

Its subcellular location is the cell membrane. The protein localises to the cytoplasm. It carries out the reaction ATP + H2O + cellular proteinSide 1 = ADP + phosphate + cellular proteinSide 2.. Part of the Sec protein translocase complex. Interacts with the SecYEG preprotein conducting channel. Has a central role in coupling the hydrolysis of ATP to the transfer of proteins into and across the cell membrane, serving as an ATP-driven molecular motor driving the stepwise translocation of polypeptide chains across the membrane. The protein is Protein translocase subunit SecA of Clostridium botulinum (strain Alaska E43 / Type E3).